The primary structure comprises 298 residues: Small ribosomal subunit protein uS3m (298 aa).

It belongs to the universal ribosomal protein uS3 family.

Its subcellular location is the mitochondrion. The polypeptide is Small ribosomal subunit protein uS3m (RPS3) (Acanthamoeba castellanii (Amoeba)).